Here is a 199-residue protein sequence, read N- to C-terminus: Superoxide dismutase [Mn/Fe] 1 (199 aa).

Residues H27, H81, D161, and H165 each coordinate Fe(3+). H27, H81, D161, and H165 together coordinate Mn(2+).

This sequence belongs to the iron/manganese superoxide dismutase family. Homodimer. Can also form a heterodimer with SodM. The cofactor is Mn(2+). Requires Fe(3+) as cofactor.

It catalyses the reaction 2 superoxide + 2 H(+) = H2O2 + O2. Destroys superoxide anion radicals which are normally produced within the cells and which are toxic to biological systems. Catalyzes the dismutation of superoxide anion radicals into O2 and H2O2 by successive reduction and oxidation of the transition metal ion at the active site. This chain is Superoxide dismutase [Mn/Fe] 1 (sodA), found in Staphylococcus aureus (strain USA300).